Reading from the N-terminus, the 35-residue chain is Photosystem II reaction center protein M (35 aa).

A helical membrane pass occupies residues I5–L25.

It belongs to the PsbM family. As to quaternary structure, PSII is composed of 1 copy each of membrane proteins PsbA, PsbB, PsbC, PsbD, PsbE, PsbF, PsbH, PsbI, PsbJ, PsbK, PsbL, PsbM, PsbT, PsbX, PsbY, PsbZ, Psb30/Ycf12, at least 3 peripheral proteins of the oxygen-evolving complex and a large number of cofactors. It forms dimeric complexes.

The protein localises to the plastid. Its subcellular location is the chloroplast thylakoid membrane. Its function is as follows. One of the components of the core complex of photosystem II (PSII). PSII is a light-driven water:plastoquinone oxidoreductase that uses light energy to abstract electrons from H(2)O, generating O(2) and a proton gradient subsequently used for ATP formation. It consists of a core antenna complex that captures photons, and an electron transfer chain that converts photonic excitation into a charge separation. This subunit is found at the monomer-monomer interface. The protein is Photosystem II reaction center protein M of Oltmannsiellopsis viridis (Marine flagellate).